The sequence spans 398 residues: Exodeoxyribonuclease 7 large subunit (398 aa).

The protein belongs to the XseA family. As to quaternary structure, heterooligomer composed of large and small subunits.

It is found in the cytoplasm. It carries out the reaction Exonucleolytic cleavage in either 5'- to 3'- or 3'- to 5'-direction to yield nucleoside 5'-phosphates.. Functionally, bidirectionally degrades single-stranded DNA into large acid-insoluble oligonucleotides, which are then degraded further into small acid-soluble oligonucleotides. The chain is Exodeoxyribonuclease 7 large subunit from Salinibacter ruber (strain DSM 13855 / M31).